The following is a 121-amino-acid chain: Large ribosomal subunit protein bL21c (121 aa).

It belongs to the bacterial ribosomal protein bL21 family. As to quaternary structure, part of the 50S ribosomal subunit.

Its subcellular location is the plastid. The protein resides in the chloroplast. Functionally, this protein binds to 23S rRNA. This Huperzia lucidula (Shining clubmoss) protein is Large ribosomal subunit protein bL21c.